The following is a 263-amino-acid chain: MTQTNQAPLVIKLGGAALSCTQTLSQLFGAIAAYQKSAQRQIAIVHGGGYLVDELMTKLQLETVKKNGLRVTPYEQIPVIAGALAGTANKLLQGQAIADGLNAVGLSLADGGLCHVEELDPELGAVGKASPGDSTLLQAVLNAGALPIISSIGLTEKGQMMNVNADQAAVAVAGALDAELVLLSDVSGVLDGKGHLIKTLSEQEADALIQGQVITDGMIVKVKAALEAANDLGRPIEVATWRYPEKLTQLFAGESIGTQFLPQ.

Residues G48–G49, R70, and N162 contribute to the substrate site.

The protein belongs to the acetylglutamate kinase family. ArgB subfamily.

It is found in the cytoplasm. The catalysed reaction is N-acetyl-L-glutamate + ATP = N-acetyl-L-glutamyl 5-phosphate + ADP. It functions in the pathway amino-acid biosynthesis; L-arginine biosynthesis; N(2)-acetyl-L-ornithine from L-glutamate: step 2/4. Its function is as follows. Catalyzes the ATP-dependent phosphorylation of N-acetyl-L-glutamate. The polypeptide is Acetylglutamate kinase (Vibrio campbellii (strain ATCC BAA-1116)).